A 110-amino-acid polypeptide reads, in one-letter code: Protein RALF-like 4 (110 aa).

An N-terminal signal peptide occupies residues 1–23 (MGVKMLLIFGLLILAMVAKSVNA). A propeptide spans 24–58 (TYPLTKSCINGQGCIGEDDELESLMDSETNRRQLA) (removed in mature form). 2 disulfides stabilise this stretch: Cys-76–Cys-86 and Cys-99–Cys-105.

The protein belongs to the plant rapid alkalinization factor (RALF) family. Post-translationally, proteolytically cleaved, probably by S1P, a subtilisin-like serine protease (subtilase).

The protein resides in the secreted. Functionally, cell signaling peptide that may regulate plant stress, growth, and development. Mediates a rapid alkalinization of extracellular space by mediating a transient increase in the cytoplasmic Ca(2+) concentration leading to a calcium-dependent signaling events through a cell surface receptor and a concomitant activation of some intracellular mitogen-activated protein kinases. The sequence is that of Protein RALF-like 4 (RALFL4) from Arabidopsis thaliana (Mouse-ear cress).